A 635-amino-acid polypeptide reads, in one-letter code: Chaperone protein DnaK (635 aa).

T198 is subject to Phosphothreonine; by autocatalysis. A disordered region spans residues 598 to 635 (YAKAQPGEEQAGGAPHEGEAKDEKVVDADFEEVKEDKK). Basic and acidic residues predominate over residues 613–624 (HEGEAKDEKVVD). The segment covering 625–635 (ADFEEVKEDKK) has biased composition (acidic residues).

Belongs to the heat shock protein 70 family.

In terms of biological role, acts as a chaperone. The chain is Chaperone protein DnaK from Geotalea uraniireducens (strain Rf4) (Geobacter uraniireducens).